Reading from the N-terminus, the 213-residue chain is Probable inactive serine/threonine-protein kinase DDB_G0280559 (213 aa).

One can recognise a Protein kinase domain in the interval 1-211 (MVLRYSYVFK…WNEIVNHSFF (211 aa)).

This sequence belongs to the protein kinase superfamily. Ser/Thr protein kinase family.

The chain is Probable inactive serine/threonine-protein kinase DDB_G0280559 from Dictyostelium discoideum (Social amoeba).